A 207-amino-acid chain; its full sequence is Ribosomal RNA large subunit methyltransferase E (207 aa).

Positions 49, 51, 69, 87, and 111 each coordinate S-adenosyl-L-methionine. Residue K151 is the Proton acceptor of the active site.

This sequence belongs to the class I-like SAM-binding methyltransferase superfamily. RNA methyltransferase RlmE family.

It localises to the cytoplasm. It catalyses the reaction uridine(2552) in 23S rRNA + S-adenosyl-L-methionine = 2'-O-methyluridine(2552) in 23S rRNA + S-adenosyl-L-homocysteine + H(+). Functionally, specifically methylates the uridine in position 2552 of 23S rRNA at the 2'-O position of the ribose in the fully assembled 50S ribosomal subunit. The chain is Ribosomal RNA large subunit methyltransferase E from Oleidesulfovibrio alaskensis (strain ATCC BAA-1058 / DSM 17464 / G20) (Desulfovibrio alaskensis).